Reading from the N-terminus, the 235-residue chain is Type III pantothenate kinase (235 aa).

6–13 (DVGNNYIK) provides a ligand contact to ATP. Substrate is bound by residues tyrosine 81 and 88 to 91 (GTDR). The active-site Proton acceptor is the aspartate 90. Aspartate 111 contacts K(+). Threonine 114 is an ATP binding site. Substrate is bound at residue threonine 166.

This sequence belongs to the type III pantothenate kinase family. As to quaternary structure, homodimer. NH4(+) serves as cofactor. The cofactor is K(+).

It is found in the cytoplasm. It catalyses the reaction (R)-pantothenate + ATP = (R)-4'-phosphopantothenate + ADP + H(+). The protein operates within cofactor biosynthesis; coenzyme A biosynthesis; CoA from (R)-pantothenate: step 1/5. Catalyzes the phosphorylation of pantothenate (Pan), the first step in CoA biosynthesis. This is Type III pantothenate kinase from Cytophaga hutchinsonii (strain ATCC 33406 / DSM 1761 / CIP 103989 / NBRC 15051 / NCIMB 9469 / D465).